A 901-amino-acid chain; its full sequence is HTH-type transcriptional regulator MalT (901 aa).

Residue 39 to 46 (SPAGYGKT) coordinates ATP. The 66-residue stretch at 829–894 (ELIRTSPLTQ…DAVQHAQQLL (66 aa)) folds into the HTH luxR-type domain. Positions 853 to 872 (NEQIAGELAVAATTIKTHIR) form a DNA-binding region, H-T-H motif.

It belongs to the MalT family. As to quaternary structure, monomer in solution. Oligomerizes to an active state in the presence of the positive effectors ATP and maltotriose.

Activated by ATP and maltotriose, which are both required for DNA binding. In terms of biological role, positively regulates the transcription of the maltose regulon whose gene products are responsible for uptake and catabolism of malto-oligosaccharides. Specifically binds to the promoter region of its target genes, recognizing a short DNA motif called the MalT box. This chain is HTH-type transcriptional regulator MalT, found in Salmonella typhi.